The primary structure comprises 310 residues: Regulator of microtubule dynamics protein 1 (310 aa).

Lysine 165 is modified (N6-succinyllysine). 2 TPR repeats span residues 168-204 (AICI…NPKD) and 222-258 (PWYQ…DPNF).

This sequence belongs to the RMDN family. Interacts with microtubules.

Its subcellular location is the cytoplasm. It localises to the cytoskeleton. The protein localises to the spindle. The protein resides in the spindle pole. This Rattus norvegicus (Rat) protein is Regulator of microtubule dynamics protein 1 (Rmdn1).